A 79-amino-acid chain; its full sequence is Calcium/calmodulin-dependent protein kinase II inhibitor 2 (79 aa).

Residues 43–69 (KRPPKLGQIGRAKRVVIEDDRIDEVLK) are inhibitory domain.

It belongs to the CAMK2N family.

It localises to the nucleus. Its subcellular location is the cytoplasm. It is found in the cytosol. Potent and specific cellular inhibitor of CaM-kinase II (CAMK2). Traps Ca(2+)/calmodulin on CAMK2. This is Calcium/calmodulin-dependent protein kinase II inhibitor 2 (camk2n2) from Xenopus tropicalis (Western clawed frog).